A 97-amino-acid polypeptide reads, in one-letter code: HssA/B-like protein 47 (97 aa).

The tract at residues 1-33 is disordered; that stretch reads MTLFSSISSISNPMTSSKSSIASFGSGTSMSSN.

Belongs to the hssA/B family.

In Dictyostelium discoideum (Social amoeba), this protein is HssA/B-like protein 47 (hssl47).